The sequence spans 413 residues: Putative F-box/kelch-repeat protein At4g22430 (413 aa).

The region spanning 5 to 54 (NNTITDVLEGIVTEILVRLPLRSISRFKSVSQTWKSAIESVYFRRLFVSL) is the F-box domain. A Kelch repeat occupies 168 to 210 (NMFLNKGEMYMPLYVYSSETGFWIHKEVVCPVRLPNFYDPISL).

The polypeptide is Putative F-box/kelch-repeat protein At4g22430 (Arabidopsis thaliana (Mouse-ear cress)).